The primary structure comprises 61 residues: Bacteriocin mesentericin Y105 (61 aa).

The first 24 residues, 1–24, serve as a signal peptide directing secretion; sequence MTNMKSVEAYQQLDNQNLKKVVGG. Residues Cys33 and Cys38 are joined by a disulfide bond.

This sequence belongs to the bacteriocin class IIA/YGNGV family.

The protein localises to the secreted. In terms of biological role, bacteriocin active against Listeria monocytogenes. The chain is Bacteriocin mesentericin Y105 (mesY) from Leuconostoc mesenteroides.